A 356-amino-acid polypeptide reads, in one-letter code: MEYINWDNYSLEDLFGDIDNYTYNTEMPIIPADSAPCRPESLDINKYAVVVIYVLVFVLNLLGNSLVIMVVLYSRVSHSVTDVYLLNLAIADLLFALTLPIWAVSKVKGWIFGTPLCKIVSLLKEVNFYSGILLLASISMDRYLAIVHATRRLTQKKHWVKFICLGIWALSLILSLPIFVFRRAINPPYSSPVCYEDMGTNTTKLRIVMRALPQTFGFIVPLMIMLFCYGLTLRTLFEAHMGQKHRAMRVIFAVVLVFLLCWLPYNLVADTLMRLQAIEETCQRRNDIGRALDATEILGFFHSCLNPLIYAFIGQKFRHGLLKIMAFHGLISKEYLPKDSRPSFVGSSSANTSTTF.

The Extracellular segment spans residues 1–46; sequence MEYINWDNYSLEDLFGDIDNYTYNTEMPIIPADSAPCRPESLDINK. N-linked (GlcNAc...) asparagine glycans are attached at residues asparagine 8 and asparagine 20. A helical transmembrane segment spans residues 47–73; it reads YAVVVIYVLVFVLNLLGNSLVIMVVLY. Residues 74–82 lie on the Cytoplasmic side of the membrane; it reads SRVSHSVTD. A helical membrane pass occupies residues 83-103; that stretch reads VYLLNLAIADLLFALTLPIWA. The Extracellular portion of the chain corresponds to 104–118; it reads VSKVKGWIFGTPLCK. A disulfide bond links cysteine 117 and cysteine 194. The chain crosses the membrane as a helical span at residues 119-140; it reads IVSLLKEVNFYSGILLLASISM. The Cytoplasmic segment spans residues 141-161; that stretch reads DRYLAIVHATRRLTQKKHWVK. Residues 162–181 traverse the membrane as a helical segment; that stretch reads FICLGIWALSLILSLPIFVF. Topologically, residues 182-206 are extracellular; that stretch reads RRAINPPYSSPVCYEDMGTNTTKLR. The chain crosses the membrane as a helical span at residues 207 to 229; sequence IVMRALPQTFGFIVPLMIMLFCY. Residues 230–249 lie on the Cytoplasmic side of the membrane; sequence GLTLRTLFEAHMGQKHRAMR. A helical transmembrane segment spans residues 250–269; sequence VIFAVVLVFLLCWLPYNLVA. Over 270 to 290 the chain is Extracellular; the sequence is DTLMRLQAIEETCQRRNDIGR. The helical transmembrane segment at 291-311 threads the bilayer; sequence ALDATEILGFFHSCLNPLIYA. Over 312–356 the chain is Cytoplasmic; sequence FIGQKFRHGLLKIMAFHGLISKEYLPKDSRPSFVGSSSANTSTTF.

Belongs to the G-protein coupled receptor 1 family. In terms of assembly, interacts with IL8. Interacts with GNAI2. Post-translationally, phosphorylated upon ligand binding; which is required for desensitization.

The protein resides in the cell membrane. Its function is as follows. Receptor for interleukin-8 which is a powerful neutrophil chemotactic factor. Binding of IL-8 to the receptor causes activation of neutrophils. This response is mediated via a G-protein that activates a phosphatidylinositol-calcium second messenger system. Binds to IL-8 with high affinity. Also binds with high affinity to CXCL3, GRO/MGSA and NAP-2. The chain is C-X-C chemokine receptor type 2 (CXCR2) from Canis lupus familiaris (Dog).